The chain runs to 100 residues: Urease subunit gamma (100 aa).

It belongs to the urease gamma subunit family. Heterotrimer of UreA (gamma), UreB (beta) and UreC (alpha) subunits. Three heterotrimers associate to form the active enzyme.

The protein localises to the cytoplasm. It catalyses the reaction urea + 2 H2O + H(+) = hydrogencarbonate + 2 NH4(+). It functions in the pathway nitrogen metabolism; urea degradation; CO(2) and NH(3) from urea (urease route): step 1/1. The chain is Urease subunit gamma from Prochlorococcus marinus (strain MIT 9303).